The following is a 498-amino-acid chain: Tryptophan decarboxylase TDC2 (498 aa).

The residue at position 316 (lysine 316) is an N6-(pyridoxal phosphate)lysine.

This sequence belongs to the group II decarboxylase family. It depends on pyridoxal 5'-phosphate as a cofactor.

The catalysed reaction is L-tryptophan + H(+) = tryptamine + CO2. Involved in the biosynthesis of tryptamine. Supplies tryptamine for the indole moiety of camptothecin (CPT), an anti-cancer monoterpene alkaloid. Represents a key step in monoterpene indole alkaloid biosynthesis. Is specific for tryptophan, and inactive against tyrosine, phenylalanine and 3,4-dihydroxyphenylalanine (dopa). In Camptotheca acuminata (Happy tree), this protein is Tryptophan decarboxylase TDC2.